Here is a 942-residue protein sequence, read N- to C-terminus: MAGGGKHTPTPKAIIHQKFGAKASYTVEEVHDSSQSGCLGLAIPQKGPCLYRCHLQLPEFSVVSNVFKKKKDSEQSAAELALDKLGIRPQNDDLTVDEARDEIVGRIKYIFSDEFLSAEHPLGAHLRAALRRDGERCGSVPVSVIATVDAKINSRCKIINPSVESDPFLAISYVMKAAAKLADYIVASPHGLRRKNAYPSEIVEALATHVSDSLHSREVAAVYIPCIDEEVVELDTLYISSNRHYLDSIAERLGLKDGNQVMISRMFGKASCGSECRLYSEIPKKYLDNSSDASGTSNEDSSHIVKSRNARASYICGQDIHGDAILASVGYRWKSDDLDYDDVTVNSFYRICCGMSPNGIYKISRQAVIAAQLPFAFTTKSNWRGPLPREILGLFCHQHRLAEPILSSSTAPVKSLSDIFRSHKKLKVSGVDDANENLSRQKEDTPGLGHGFRCEVKIFTKSQDLVLECSPRKFYEKENDAIQNASLKALLWFSKFFADLDVDGEQSCDTDDDQDTKSSSPNVFAAPPILQKEHSSESKNTNVLSAEKRVQSITNGSVVSICYSLSLAVDPEYSSDGESPREDNESNEEMESEYSANCESSVELIESNEEIEFEVGTGSMNPHIESEVTQMTVGEYASFRMTPPDAAEALILAVGSDTVRIRSLLSERPCLNYNILLLGVKGPSEERMEAAFFKPPLSKQRVEYALKHIRESSASTLVDFGCGSGSLLDSLLDYPTSLQTIIGVDISPKGLARAAKMLHVKLNKEACNVKSATLYDGSILEFDSRLHDVDIGTCLEVIEHMEEDQACEFGEKVLSLFHPKLLIVSTPNYEFNTILQRSTPETQEENNSEPQLPKFRNHDHKFEWTREQFNQWASKLGKRHNYSVEFSGVGGSGEVEPGFASQIAIFRREASSVENVAESSMQPYKVIWEWKKEDVEKKKTDL.

One can recognise a DRBM domain in the interval 19-87 (FGAKASYTVE…AELALDKLGI (69 aa)). Residues 93-204 (DLTVDEARDE…KNAYPSEIVE (112 aa)) enclose the HTH La-type RNA-binding domain. The span at 505 to 514 (EQSCDTDDDQ) shows a compositional bias: acidic residues. Disordered stretches follow at residues 505–542 (EQSCDTDDDQDTKSSSPNVFAAPPILQKEHSSESKNTN) and 571–596 (PEYSSDGESPREDNESNEEMESEYSA). S-adenosyl-L-methionine is bound by residues Ser726, Asp745, 778 to 779 (SI), and Leu795. Mg(2+) contacts are provided by Glu796, Glu799, and His800. The tract at residues 837–856 (RSTPETQEENNSEPQLPKFR) is disordered. Mg(2+) is bound at residue His860.

The protein belongs to the methyltransferase superfamily. HEN1 family. Binds small RNA duplexes as monomer. Mg(2+) is required as a cofactor. As to expression, expressed in stems, leaves and inflorescences.

The protein resides in the nucleus. It carries out the reaction small RNA 3'-end nucleotide + S-adenosyl-L-methionine = small RNA 3'-end 2'-O-methylnucleotide + S-adenosyl-L-homocysteine + H(+). In terms of biological role, methyltransferase that adds a methyl group to the ribose of the last nucleotide of small RNAs (sRNAs). This protects the 3'-end of sRNAs from uridylation activity and subsequent degradation. Can methylate 3'-end of microRNAs (miRNAs), small interfering RNAs (siRNas) and trans-acting small interfering RNAs (ta-siRNAs). Involved in plant development through its role in small RNAs processing. Required for the specification of reproductive organ identities and the probable repression of A class genes. May control floral determinacy possibly by regulating the expression of the C class floral homeotic gene AGAMOUS (AG). In Arabidopsis thaliana (Mouse-ear cress), this protein is Small RNA 2'-O-methyltransferase (HEN1).